The primary structure comprises 302 residues: Protein transport protein SEC13 homolog B (302 aa).

WD repeat units lie at residues 9–48, 54–95, 101–142, 148–201, 208–251, and 257–296; these read GHEDIVHDVQMDYYGKRIATASSDCTIKITGVSNNGGSQQ, GHRG…QWTQ, DHKS…GWDT, AHPV…WKMD, KHTD…EQWE, and DFMTPVWRVSWSLTGNLLAVSDGNNNVTVWKEAVDGEWEQ.

Belongs to the WD repeat SEC13 family. Part of the nuclear pore complex (NPC). The NPC has an eight-fold symmetrical structure comprising a central transport channel and two rings, the cytoplasmic and nuclear rings, to which eight filaments are attached. The cytoplasmic filaments have loose ends, while the nuclear filaments are joined in a distal ring, forming a nuclear basket. NPCs are highly dynamic in configuration and composition, and can be devided in 3 subcomplexes, the NUP62 subcomplex, the NUP107-160 subcomplex and the NUP93 subcomplex, containing approximately 30 different nucleoporin proteins. Interacts with MAG5, SEC31A and SEC31B.

The protein localises to the golgi apparatus. It localises to the endoplasmic reticulum. Its subcellular location is the nucleus envelope. It is found in the nucleus. The protein resides in the nuclear pore complex. Required for protein transport from the endoplasmic reticulum to the Golgi apparatus. The chain is Protein transport protein SEC13 homolog B from Arabidopsis thaliana (Mouse-ear cress).